Reading from the N-terminus, the 72-residue chain is Protein kish-A (72 aa).

Residues 1 to 26 (MSAIFNFQSLLTVILLLICTCAYIRS) form the signal peptide. Topologically, residues 27–53 (LAPSLLDKNKTGLLGIFWKCARIGERK) are extracellular. Residue Asn-35 is glycosylated (N-linked (GlcNAc...) asparagine). A helical transmembrane segment spans residues 54–71 (SPYVAVCCVVMAFSILFV). Residue Gln-72 is a topological domain, cytoplasmic.

Belongs to the KISH family.

It is found in the golgi apparatus membrane. Functionally, involved in the early part of the secretory pathway. The chain is Protein kish-A (TMEM167A) from Gallus gallus (Chicken).